We begin with the raw amino-acid sequence, 334 residues long: Cytosolic Fe-S cluster assembly factor NUBP1 homolog (334 aa).

A disordered region spans residues 1-24 (MSSAEVTAAAKPADAPEHCPGTAS). [4Fe-4S] cluster is bound by residues C19, C33, C36, and C42. 72 to 79 (GKGGVGKS) provides a ligand contact to ATP. C247 and C250 together coordinate [4Fe-4S] cluster.

Belongs to the Mrp/NBP35 ATP-binding proteins family. NUBP1/NBP35 subfamily. As to quaternary structure, heterotetramer of 2 NUBP1 and 2 NUBP2 chains. Requires [4Fe-4S] cluster as cofactor.

The protein resides in the cytoplasm. Its function is as follows. Component of the cytosolic iron-sulfur (Fe/S) protein assembly (CIA) machinery. Required for maturation of extramitochondrial Fe-S proteins. The NUBP1-NUBP2 heterotetramer forms a Fe-S scaffold complex, mediating the de novo assembly of an Fe-S cluster and its transfer to target apoproteins. In Culex quinquefasciatus (Southern house mosquito), this protein is Cytosolic Fe-S cluster assembly factor NUBP1 homolog.